The primary structure comprises 172 residues: NADH-quinone oxidoreductase subunit B (172 aa).

[4Fe-4S] cluster contacts are provided by cysteine 42, cysteine 43, cysteine 107, and cysteine 136.

This sequence belongs to the complex I 20 kDa subunit family. In terms of assembly, NDH-1 is composed of 14 different subunits. Subunits NuoB, C, D, E, F, and G constitute the peripheral sector of the complex. [4Fe-4S] cluster is required as a cofactor.

Its subcellular location is the cell inner membrane. The enzyme catalyses a quinone + NADH + 5 H(+)(in) = a quinol + NAD(+) + 4 H(+)(out). In terms of biological role, NDH-1 shuttles electrons from NADH, via FMN and iron-sulfur (Fe-S) centers, to quinones in the respiratory chain. The immediate electron acceptor for the enzyme in this species is believed to be ubiquinone. Couples the redox reaction to proton translocation (for every two electrons transferred, four hydrogen ions are translocated across the cytoplasmic membrane), and thus conserves the redox energy in a proton gradient. This chain is NADH-quinone oxidoreductase subunit B, found in Sulfurovum sp. (strain NBC37-1).